The following is a 356-amino-acid chain: UDP-N-acetylglucosamine--N-acetylmuramyl-(pentapeptide) pyrophosphoryl-undecaprenol N-acetylglucosamine transferase (356 aa).

Residues 11-13, asparagine 117, arginine 160, serine 188, and glutamine 290 contribute to the UDP-N-acetyl-alpha-D-glucosamine site; that span reads TGG.

Belongs to the glycosyltransferase 28 family. MurG subfamily.

The protein resides in the cell inner membrane. It carries out the reaction di-trans,octa-cis-undecaprenyl diphospho-N-acetyl-alpha-D-muramoyl-L-alanyl-D-glutamyl-meso-2,6-diaminopimeloyl-D-alanyl-D-alanine + UDP-N-acetyl-alpha-D-glucosamine = di-trans,octa-cis-undecaprenyl diphospho-[N-acetyl-alpha-D-glucosaminyl-(1-&gt;4)]-N-acetyl-alpha-D-muramoyl-L-alanyl-D-glutamyl-meso-2,6-diaminopimeloyl-D-alanyl-D-alanine + UDP + H(+). It participates in cell wall biogenesis; peptidoglycan biosynthesis. In terms of biological role, cell wall formation. Catalyzes the transfer of a GlcNAc subunit on undecaprenyl-pyrophosphoryl-MurNAc-pentapeptide (lipid intermediate I) to form undecaprenyl-pyrophosphoryl-MurNAc-(pentapeptide)GlcNAc (lipid intermediate II). In Rickettsia bellii (strain RML369-C), this protein is UDP-N-acetylglucosamine--N-acetylmuramyl-(pentapeptide) pyrophosphoryl-undecaprenol N-acetylglucosamine transferase.